Consider the following 414-residue polypeptide: 3-oxoacyl-[acyl-carrier-protein] synthase 2 (414 aa).

In terms of domain architecture, Ketosynthase family 3 (KS3) spans 4-411; that stretch reads NKRVVITGMG…GHNAVLVFKK (408 aa). Active-site for beta-ketoacyl synthase activity residues include Cys-165, His-304, and His-341.

The protein belongs to the thiolase-like superfamily. Beta-ketoacyl-ACP synthases family.

The enzyme catalyses a fatty acyl-[ACP] + malonyl-[ACP] + H(+) = a 3-oxoacyl-[ACP] + holo-[ACP] + CO2. The catalysed reaction is (9Z)-hexadecenoyl-[ACP] + malonyl-[ACP] + H(+) = 3-oxo-(11Z)-octadecenoyl-[ACP] + holo-[ACP] + CO2. It participates in lipid metabolism; fatty acid biosynthesis. Functionally, involved in the type II fatty acid elongation cycle. Catalyzes the elongation of a wide range of acyl-ACP by the addition of two carbons from malonyl-ACP to an acyl acceptor. Can efficiently catalyze the conversion of palmitoleoyl-ACP (cis-hexadec-9-enoyl-ACP) to cis-vaccenoyl-ACP (cis-octadec-11-enoyl-ACP), an essential step in the thermal regulation of fatty acid composition. The sequence is that of 3-oxoacyl-[acyl-carrier-protein] synthase 2 (fabF) from Staphylococcus aureus (strain Mu50 / ATCC 700699).